The primary structure comprises 219 residues: Octanoyltransferase (219 aa).

The BPL/LPL catalytic domain occupies 32 to 207 (ADSGDEIWLL…HLVRQLGYAQ (176 aa)). Residues 71-78 (RGGQVTYH), 138-140 (SLG), and 151-153 (GLA) contribute to the substrate site. C169 (acyl-thioester intermediate) is an active-site residue.

It belongs to the LipB family.

It is found in the cytoplasm. The enzyme catalyses octanoyl-[ACP] + L-lysyl-[protein] = N(6)-octanoyl-L-lysyl-[protein] + holo-[ACP] + H(+). The protein operates within protein modification; protein lipoylation via endogenous pathway; protein N(6)-(lipoyl)lysine from octanoyl-[acyl-carrier-protein]: step 1/2. Functionally, catalyzes the transfer of endogenously produced octanoic acid from octanoyl-acyl-carrier-protein onto the lipoyl domains of lipoate-dependent enzymes. Lipoyl-ACP can also act as a substrate although octanoyl-ACP is likely to be the physiological substrate. This is Octanoyltransferase from Stutzerimonas stutzeri (strain A1501) (Pseudomonas stutzeri).